The chain runs to 474 residues: MFVVSEMADFIKAGGLGDVAAALPRALRHRYDVRVLIPGYRAVLARAGKVEIVGRVLAHAALPACDIGRIVQSDGLPIYILLSKELFERDGSPYVSTSGSEFEDNAIRFATLSHAAAQIAAGRAGLGWRPRLLHLNDWPCALAAAYVRWSGGTTPCLLTIHNLAYQGLVPYSMAAALGIPAERVSELEFYGQMSFLRGGIVHADHVNTVSVSYAQQITGPAQGCGLDRLLAGRAAKGALSGIVNGIDASWDPRTDEYLDSHFSVNHWQGRQANAAQVRKAFGLRESTGPLFAVVSRLVHQKGLDLICEVAPQIVAAGGQIAVIGGGEPEIEQQVAELTRRYPGQVGAFIGFEEGLARRMFAGADFLLMPSRFEPCGLSQMYAQRFGCLPIAHATGGLIDTVDDGVTGFLFQQASAEALRRCLERAFRTFRLPSLLSAMRRAAMLRPSGWDVAGKKYISLYERTAATAPAVATVS.

Lys12 contacts ADP-alpha-D-glucose.

It belongs to the glycosyltransferase 1 family. Bacterial/plant glycogen synthase subfamily.

The catalysed reaction is [(1-&gt;4)-alpha-D-glucosyl](n) + ADP-alpha-D-glucose = [(1-&gt;4)-alpha-D-glucosyl](n+1) + ADP + H(+). The protein operates within glycan biosynthesis; glycogen biosynthesis. Its function is as follows. Synthesizes alpha-1,4-glucan chains using ADP-glucose. The protein is Glycogen synthase of Xanthomonas campestris pv. campestris (strain 8004).